The chain runs to 163 residues: Cytochrome c-type biogenesis protein CcmE (163 aa).

Residues 1 to 8 (MNPRRKKR) are Cytoplasmic-facing. A helical; Signal-anchor for type II membrane protein membrane pass occupies residues 9 to 29 (LTIILAISAGLAAVIGLVLYA). Residues 30 to 163 (LSQNIDLFYT…TEAQLKGAKQ (134 aa)) lie on the Periplasmic side of the membrane. Residues H131 and Y135 each coordinate heme.

It belongs to the CcmE/CycJ family.

It is found in the cell inner membrane. Functionally, heme chaperone required for the biogenesis of c-type cytochromes. Transiently binds heme delivered by CcmC and transfers the heme to apo-cytochromes in a process facilitated by CcmF and CcmH. The sequence is that of Cytochrome c-type biogenesis protein CcmE from Aeromonas salmonicida (strain A449).